Consider the following 211-residue polypeptide: Cytochrome c biogenesis ATP-binding export protein CcmA (211 aa).

The 203-residue stretch at 8–210 folds into the ABC transporter domain; it reads LEAKNLQCER…EVRRIQLGAV (203 aa). Residue 40–47 participates in ATP binding; sequence GPNGAGKT.

The protein belongs to the ABC transporter superfamily. CcmA exporter (TC 3.A.1.107) family. In terms of assembly, the complex is composed of two ATP-binding proteins (CcmA) and two transmembrane proteins (CcmB).

The protein resides in the cell inner membrane. It carries out the reaction heme b(in) + ATP + H2O = heme b(out) + ADP + phosphate + H(+). In terms of biological role, part of the ABC transporter complex CcmAB involved in the biogenesis of c-type cytochromes; once thought to export heme, this seems not to be the case, but its exact role is uncertain. Responsible for energy coupling to the transport system. The protein is Cytochrome c biogenesis ATP-binding export protein CcmA of Hahella chejuensis (strain KCTC 2396).